The chain runs to 205 residues: ATP-dependent Clp protease proteolytic subunit (205 aa).

S98 acts as the Nucleophile in catalysis. Residue H123 is part of the active site.

It belongs to the peptidase S14 family. As to quaternary structure, fourteen ClpP subunits assemble into 2 heptameric rings which stack back to back to give a disk-like structure with a central cavity, resembling the structure of eukaryotic proteasomes.

It is found in the cytoplasm. The catalysed reaction is Hydrolysis of proteins to small peptides in the presence of ATP and magnesium. alpha-casein is the usual test substrate. In the absence of ATP, only oligopeptides shorter than five residues are hydrolyzed (such as succinyl-Leu-Tyr-|-NHMec, and Leu-Tyr-Leu-|-Tyr-Trp, in which cleavage of the -Tyr-|-Leu- and -Tyr-|-Trp bonds also occurs).. In terms of biological role, cleaves peptides in various proteins in a process that requires ATP hydrolysis. Has a chymotrypsin-like activity. Plays a major role in the degradation of misfolded proteins. The chain is ATP-dependent Clp protease proteolytic subunit from Desulforapulum autotrophicum (strain ATCC 43914 / DSM 3382 / VKM B-1955 / HRM2) (Desulfobacterium autotrophicum).